A 149-amino-acid chain; its full sequence is Large ribosomal subunit protein uL13 (149 aa).

It belongs to the universal ribosomal protein uL13 family. As to quaternary structure, part of the 50S ribosomal subunit.

This protein is one of the early assembly proteins of the 50S ribosomal subunit, although it is not seen to bind rRNA by itself. It is important during the early stages of 50S assembly. This is Large ribosomal subunit protein uL13 from Chlorobium phaeobacteroides (strain DSM 266 / SMG 266 / 2430).